Here is a 140-residue protein sequence, read N- to C-terminus: Putative pre-16S rRNA nuclease (140 aa).

It belongs to the YqgF nuclease family.

Its subcellular location is the cytoplasm. Functionally, could be a nuclease involved in processing of the 5'-end of pre-16S rRNA. This chain is Putative pre-16S rRNA nuclease, found in Yersinia pseudotuberculosis serotype O:1b (strain IP 31758).